Reading from the N-terminus, the 293-residue chain is ESX-3 secretion-associated protein EspG3 (293 aa).

The protein belongs to the EspG family.

The protein localises to the cytoplasm. The protein is ESX-3 secretion-associated protein EspG3 of Mycolicibacterium smegmatis (strain ATCC 700084 / mc(2)155) (Mycobacterium smegmatis).